The chain runs to 131 residues: Profilin-1 (131 aa).

Residues Cys13 and Cys115 are joined by a disulfide bond. Positions 81 to 97 match the Involved in PIP2 interaction motif; it reads RVIRGKKGAGGITIKKT. Thr111 bears the Phosphothreonine mark.

It belongs to the profilin family. As to quaternary structure, occurs in many kinds of cells as a complex with monomeric actin in a 1:1 ratio.

It localises to the cytoplasm. It is found in the cytoskeleton. In terms of biological role, binds to actin and affects the structure of the cytoskeleton. At high concentrations, profilin prevents the polymerization of actin, whereas it enhances it at low concentrations. By binding to PIP2, it inhibits the formation of IP3 and DG. The sequence is that of Profilin-1 (PRO1) from Phleum pratense (Common timothy).